The following is a 244-amino-acid chain: Serine-rich single-pass membrane protein 1 (244 aa).

The chain crosses the membrane as a helical span at residues C35–F55. Disordered stretches follow at residues D65 to N114, Q126 to Y191, and L210 to F244. The segment covering A80 to A94 has biased composition (basic and acidic residues). 2 stretches are compositionally biased toward polar residues: residues D96–N114 and Q132–Q142. The segment covering S161 to I176 has biased composition (basic and acidic residues).

The protein localises to the membrane. In Homo sapiens (Human), this protein is Serine-rich single-pass membrane protein 1 (SSMEM1).